The chain runs to 350 residues: WD repeat-containing protein DWA2 (350 aa).

6 WD repeats span residues 39–79, 118–158, 166–205, 206–246, 250–290, and 311–350; these read KEEN…FDQR, AHVG…KSAE, GMRHSLSGGAWNPHDVNSVAATSESSIQFWDLRTMKKNNS, IERA…FPVQ, GHTH…EHKT, and DYEDSVYGLAWSSREPWIFASLSYDGRVVIESVKPFLPRR.

In terms of assembly, interacts with ABI5 and DDB1A and DWA1.

The protein localises to the nucleus. The protein operates within protein modification; protein ubiquitination. Its function is as follows. Component of the CUL4-RBX1-DDB1-DWA1/DWA2 E3 ubiquitin-protein ligase complex that acts as a negative regulator in abscisic acid (ABA) signaling. May function as the substrate recognition module within this complex leading to ABI5 degradation. Functionally redundant with DWA1. This Arabidopsis thaliana (Mouse-ear cress) protein is WD repeat-containing protein DWA2 (DWA2).